A 489-amino-acid chain; its full sequence is Rhamnulokinase (489 aa).

An ATP-binding site is contributed by 13–17 (ASSGR). Cysteine 68 and cysteine 222 are joined by a disulfide. Substrate-binding positions include glycine 83 and 236-238 (HDT). Aspartate 237 functions as the Proton acceptor in the catalytic mechanism. Residue threonine 259 coordinates ATP. Asparagine 296 contributes to the substrate binding site. Glutamine 304 is a binding site for ATP. Cysteine 353 and cysteine 370 are joined by a disulfide. Glycine 402 contributes to the ATP binding site. Cysteine 413 and cysteine 417 are joined by a disulfide.

It belongs to the rhamnulokinase family. Monomer. The cofactor is Mg(2+).

The enzyme catalyses L-rhamnulose + ATP = L-rhamnulose 1-phosphate + ADP + H(+). The protein operates within carbohydrate degradation; L-rhamnose degradation; glycerone phosphate from L-rhamnose: step 2/3. Involved in the catabolism of L-rhamnose (6-deoxy-L-mannose). Catalyzes the transfer of the gamma-phosphate group from ATP to the 1-hydroxyl group of L-rhamnulose to yield L-rhamnulose 1-phosphate. The polypeptide is Rhamnulokinase (Escherichia coli O157:H7).